The following is a 511-amino-acid chain: 2,3-bisphosphoglycerate-independent phosphoglycerate mutase (511 aa).

Residues D12 and S62 each contribute to the Mn(2+) site. The active-site Phosphoserine intermediate is the S62. Residues H123, 152-153 (RD), R184, R190, 259-262 (RADR), and K333 contribute to the substrate site. D401, H405, D442, H443, and H460 together coordinate Mn(2+).

The protein belongs to the BPG-independent phosphoglycerate mutase family. Monomer. Mn(2+) serves as cofactor.

The enzyme catalyses (2R)-2-phosphoglycerate = (2R)-3-phosphoglycerate. It functions in the pathway carbohydrate degradation; glycolysis; pyruvate from D-glyceraldehyde 3-phosphate: step 3/5. Functionally, catalyzes the interconversion of 2-phosphoglycerate and 3-phosphoglycerate. The protein is 2,3-bisphosphoglycerate-independent phosphoglycerate mutase of Nitratidesulfovibrio vulgaris (strain ATCC 29579 / DSM 644 / CCUG 34227 / NCIMB 8303 / VKM B-1760 / Hildenborough) (Desulfovibrio vulgaris).